Consider the following 140-residue polypeptide: Large ribosomal subunit protein uL11 (140 aa).

It belongs to the universal ribosomal protein uL11 family. In terms of assembly, part of the ribosomal stalk of the 50S ribosomal subunit. Interacts with L10 and the large rRNA to form the base of the stalk. L10 forms an elongated spine to which L12 dimers bind in a sequential fashion forming a multimeric L10(L12)X complex. Post-translationally, one or more lysine residues are methylated.

Forms part of the ribosomal stalk which helps the ribosome interact with GTP-bound translation factors. The chain is Large ribosomal subunit protein uL11 from Staphylococcus aureus (strain Mu3 / ATCC 700698).